A 333-amino-acid polypeptide reads, in one-letter code: Phosphate acyltransferase (333 aa).

This sequence belongs to the PlsX family. Homodimer. Probably interacts with PlsY.

It is found in the cytoplasm. The catalysed reaction is a fatty acyl-[ACP] + phosphate = an acyl phosphate + holo-[ACP]. Its pathway is lipid metabolism; phospholipid metabolism. Catalyzes the reversible formation of acyl-phosphate (acyl-PO(4)) from acyl-[acyl-carrier-protein] (acyl-ACP). This enzyme utilizes acyl-ACP as fatty acyl donor, but not acyl-CoA. This Pelagibacter ubique (strain HTCC1062) protein is Phosphate acyltransferase.